The following is a 341-amino-acid chain: Ribosomal RNA small subunit methyltransferase H (341 aa).

S-adenosyl-L-methionine-binding positions include 47-49 (GGY), aspartate 64, phenylalanine 91, aspartate 109, and glutamine 116.

The protein belongs to the methyltransferase superfamily. RsmH family.

It localises to the cytoplasm. The enzyme catalyses cytidine(1402) in 16S rRNA + S-adenosyl-L-methionine = N(4)-methylcytidine(1402) in 16S rRNA + S-adenosyl-L-homocysteine + H(+). In terms of biological role, specifically methylates the N4 position of cytidine in position 1402 (C1402) of 16S rRNA. In Rhizobium johnstonii (strain DSM 114642 / LMG 32736 / 3841) (Rhizobium leguminosarum bv. viciae), this protein is Ribosomal RNA small subunit methyltransferase H.